A 76-amino-acid chain; its full sequence is Small ribosomal subunit protein bS18 (76 aa).

It belongs to the bacterial ribosomal protein bS18 family. As to quaternary structure, part of the 30S ribosomal subunit. Forms a tight heterodimer with protein bS6.

Its function is as follows. Binds as a heterodimer with protein bS6 to the central domain of the 16S rRNA, where it helps stabilize the platform of the 30S subunit. The protein is Small ribosomal subunit protein bS18 of Pseudomonas entomophila (strain L48).